We begin with the raw amino-acid sequence, 119 residues long: Defensin-like protein 260 (119 aa).

Positions 1–24 are cleaved as a signal peptide; it reads MKIASLKLLLLVSLLFAVTQNGIS. 4 disulfide bridges follow: Cys-44/Cys-99, Cys-63/Cys-79, Cys-69/Cys-83, and Cys-73/Cys-85.

It belongs to the DEFL family.

It localises to the secreted. The chain is Defensin-like protein 260 from Arabidopsis thaliana (Mouse-ear cress).